We begin with the raw amino-acid sequence, 504 residues long: ATP synthase subunit alpha (504 aa).

169–176 (GDRQTGKT) is an ATP binding site.

The protein belongs to the ATPase alpha/beta chains family. In terms of assembly, F-type ATPases have 2 components, CF(1) - the catalytic core - and CF(0) - the membrane proton channel. CF(1) has five subunits: alpha(3), beta(3), gamma(1), delta(1), epsilon(1). CF(0) has three main subunits: a(1), b(2) and c(9-12). The alpha and beta chains form an alternating ring which encloses part of the gamma chain. CF(1) is attached to CF(0) by a central stalk formed by the gamma and epsilon chains, while a peripheral stalk is formed by the delta and b chains.

It localises to the cell membrane. It catalyses the reaction ATP + H2O + 4 H(+)(in) = ADP + phosphate + 5 H(+)(out). Its function is as follows. Produces ATP from ADP in the presence of a proton gradient across the membrane. The alpha chain is a regulatory subunit. The sequence is that of ATP synthase subunit alpha from Clostridium kluyveri (strain ATCC 8527 / DSM 555 / NBRC 12016 / NCIMB 10680 / K1).